Here is a 92-residue protein sequence, read N- to C-terminus: Small ribosomal subunit protein uS19c (92 aa).

This sequence belongs to the universal ribosomal protein uS19 family.

It is found in the plastid. The protein localises to the chloroplast. Its function is as follows. Protein S19 forms a complex with S13 that binds strongly to the 16S ribosomal RNA. This is Small ribosomal subunit protein uS19c from Chloranthus spicatus (Chulantree).